Here is a 464-residue protein sequence, read N- to C-terminus: Siroheme synthase (464 aa).

Residues 1-203 are precorrin-2 dehydrogenase /sirohydrochlorin ferrochelatase; that stretch reads MEFLPLFHNL…GQGAEAERML (203 aa). Residues 22–23 and 43–44 each bind NAD(+); these read EI and PE. Serine 128 carries the post-translational modification Phosphoserine. A uroporphyrinogen-III C-methyltransferase region spans residues 216–464; it reads GEVYLVGAGP…AWFEGAQATL (249 aa). An S-adenosyl-L-methionine-binding site is contributed by proline 225. Aspartate 248 acts as the Proton acceptor in catalysis. The active-site Proton donor is lysine 270. Residues 301 to 303, isoleucine 306, 331 to 332, methionine 383, and glycine 412 each bind S-adenosyl-L-methionine; these read GGD and TA.

In the N-terminal section; belongs to the precorrin-2 dehydrogenase / sirohydrochlorin ferrochelatase family. It in the C-terminal section; belongs to the precorrin methyltransferase family.

The enzyme catalyses uroporphyrinogen III + 2 S-adenosyl-L-methionine = precorrin-2 + 2 S-adenosyl-L-homocysteine + H(+). It carries out the reaction precorrin-2 + NAD(+) = sirohydrochlorin + NADH + 2 H(+). It catalyses the reaction siroheme + 2 H(+) = sirohydrochlorin + Fe(2+). It participates in cofactor biosynthesis; adenosylcobalamin biosynthesis; precorrin-2 from uroporphyrinogen III: step 1/1. It functions in the pathway cofactor biosynthesis; adenosylcobalamin biosynthesis; sirohydrochlorin from precorrin-2: step 1/1. The protein operates within porphyrin-containing compound metabolism; siroheme biosynthesis; precorrin-2 from uroporphyrinogen III: step 1/1. Its pathway is porphyrin-containing compound metabolism; siroheme biosynthesis; siroheme from sirohydrochlorin: step 1/1. It participates in porphyrin-containing compound metabolism; siroheme biosynthesis; sirohydrochlorin from precorrin-2: step 1/1. Functionally, multifunctional enzyme that catalyzes the SAM-dependent methylations of uroporphyrinogen III at position C-2 and C-7 to form precorrin-2 via precorrin-1. Then it catalyzes the NAD-dependent ring dehydrogenation of precorrin-2 to yield sirohydrochlorin. Finally, it catalyzes the ferrochelation of sirohydrochlorin to yield siroheme. This is Siroheme synthase from Pseudomonas syringae pv. syringae (strain B728a).